A 133-amino-acid polypeptide reads, in one-letter code: Small ribosomal subunit protein eS8 (133 aa).

Residues 1–31 (MGFYQGPDNRKITGGLKGKHRDKRKYEIGNP) are disordered.

Belongs to the eukaryotic ribosomal protein eS8 family. In terms of assembly, part of the 30S ribosomal subunit.

In Saccharolobus solfataricus (strain ATCC 35092 / DSM 1617 / JCM 11322 / P2) (Sulfolobus solfataricus), this protein is Small ribosomal subunit protein eS8.